A 227-amino-acid chain; its full sequence is UPF0173 metal-dependent hydrolase BCAH820_4729 (227 aa).

Belongs to the UPF0173 family.

This Bacillus cereus (strain AH820) protein is UPF0173 metal-dependent hydrolase BCAH820_4729.